We begin with the raw amino-acid sequence, 424 residues long: UDP-N-acetylglucosamine 1-carboxyvinyltransferase (424 aa).

Position 22 to 23 (22 to 23 (KN)) interacts with phosphoenolpyruvate. Arg93 provides a ligand contact to UDP-N-acetyl-alpha-D-glucosamine. Cys117 serves as the catalytic Proton donor. Cys117 carries the 2-(S-cysteinyl)pyruvic acid O-phosphothioketal modification. UDP-N-acetyl-alpha-D-glucosamine contacts are provided by residues 162-165 (KVSV), Asp307, and Ile329.

The protein belongs to the EPSP synthase family. MurA subfamily.

The protein resides in the cytoplasm. The enzyme catalyses phosphoenolpyruvate + UDP-N-acetyl-alpha-D-glucosamine = UDP-N-acetyl-3-O-(1-carboxyvinyl)-alpha-D-glucosamine + phosphate. The protein operates within cell wall biogenesis; peptidoglycan biosynthesis. Functionally, cell wall formation. Adds enolpyruvyl to UDP-N-acetylglucosamine. This is UDP-N-acetylglucosamine 1-carboxyvinyltransferase from Actinobacillus pleuropneumoniae serotype 7 (strain AP76).